Reading from the N-terminus, the 187-residue chain is Elongation factor P (187 aa).

This sequence belongs to the elongation factor P family.

The protein resides in the cytoplasm. The protein operates within protein biosynthesis; polypeptide chain elongation. Its function is as follows. Involved in peptide bond synthesis. Stimulates efficient translation and peptide-bond synthesis on native or reconstituted 70S ribosomes in vitro. Probably functions indirectly by altering the affinity of the ribosome for aminoacyl-tRNA, thus increasing their reactivity as acceptors for peptidyl transferase. The sequence is that of Elongation factor P from Synechococcus sp. (strain CC9605).